We begin with the raw amino-acid sequence, 297 residues long: Palmitoyl-protein thioesterase ABHD10, mitochondrial (297 aa).

The N-terminal 43 residues, 1–43 (MAAWAPCRRWGWAAVSFGRHPGLSASLARKPPRAWWLSACRQK), are a transit peptide targeting the mitochondrion. Positions 69 to 196 (IIFIPGYLSN…EIEMKGEWTL (128 aa)) constitute an AB hydrolase-1 domain. Catalysis depends on charge relay system residues serine 143, aspartate 240, and histidine 270.

This sequence belongs to the AB hydrolase superfamily.

Its subcellular location is the mitochondrion. It catalyses the reaction S-hexadecanoyl-L-cysteinyl-[protein] + H2O = L-cysteinyl-[protein] + hexadecanoate + H(+). The enzyme catalyses mycophenolic acid O-acyl-beta-D-glucuronide + H2O = mycophenolate + D-glucuronate + H(+). Inhibited by palmostatin-B. Acts as an acyl-protein thioesterase that hydrolyzes fatty acids from acylated residues in proteins. Regulates the mitochondrial S-depalmitoylation of the nucleophilic active site residue of peroxiredoxin-5/PRDX5, a key antioxidant protein, therefore modulating mitochondrial antioxidant ability. Also catalyzes the deglucuronidation of mycophenolic acid acyl-glucuronide, an active metabolite of the immunosuppressant drug mycophenolate. The protein is Palmitoyl-protein thioesterase ABHD10, mitochondrial of Mus musculus (Mouse).